Here is a 20-residue protein sequence, read N- to C-terminus: Antifreeze protein (20 aa).

Post-translationally, N-glycosylated and O-glycosylated.

Its subcellular location is the secreted. It is found in the extracellular space. In terms of biological role, antifreeze proteins bind to the surface of ice crystals and inhibit the growth of these crystals, this inhibition causes thermal hysteresis. Causes the shape of ice crystals to change from hexagonal to a bipyramidal shape with rugged facets. Inhibits recrystallization of ice crystals. The polypeptide is Antifreeze protein (Antarctomyces psychrotrophicus).